The sequence spans 491 residues: D-xylose-proton symporter (491 aa).

Over 1–9 (MNTQYNSSY) the chain is Cytoplasmic. A helical transmembrane segment spans residues 10 to 30 (IFSITLVATLGGLLFGYDTAV). The Periplasmic segment spans residues 31 to 55 (ISGTVESLNTVFVAPQNLSESAANS). The chain crosses the membrane as a helical span at residues 56–76 (LLGFCVASALIGCIIGGALGG). The Cytoplasmic portion of the chain corresponds to 77 to 89 (YCSNRFGRRDSLK). The helical transmembrane segment at 90-110 (IAAVLFFISGVGSAWPELGFT) threads the bilayer. Topologically, residues 111–133 (SINPDNTVPVYLAGYVPEFVIYR) are periplasmic. The helical transmembrane segment at 134-154 (IIGGIGVGLASMLSPMYIAEL) threads the bilayer. Topologically, residues 155-165 (APAHIRGKLVS) are cytoplasmic. A helical transmembrane segment spans residues 166–186 (FNQFAIIFGQLLVYCVNYFIA). Q168 lines the beta-D-xylose pocket. Residues 187 to 200 (RSGDASWLNTDGWR) are Periplasmic-facing. A helical transmembrane segment spans residues 201-221 (YMFASECIPALLFLMLLYTVP). Residues 222 to 272 (ESPRWLMSRGKQEQAEGILRKIMGNTLATQAVQEIKHSLDHGRKTGGRLLM) are Cytoplasmic-facing. Residues 273-293 (FGVGVIVIGVMLSIFQQFVGI) form a helical membrane-spanning segment. Residues 288–289 (QQ) and N294 each bind beta-D-xylose. At 294–312 (NVVLYYAPEVFKTLGASTD) the chain is on the periplasmic side. A helical membrane pass occupies residues 313-333 (IALLQTIIVGVINLTFTVLAI). The Cytoplasmic segment spans residues 334–343 (MTVDKFGRKP). A helical transmembrane segment spans residues 344-364 (LQIIGALGMAIGMFSLGTAFY). Over 365 to 369 (TQAPG) the chain is Periplasmic. Residues 370–390 (IVALLSMLFYVAAFAMSWGPV) traverse the membrane as a helical segment. The Cytoplasmic portion of the chain corresponds to 391–407 (CWVLLSEIFPNAIRGKA). Beta-D-xylose is bound by residues W392 and Q415. Residues 408–428 (LAIAVAAQWLANYFVSWTFPM) traverse the membrane as a helical segment. The Periplasmic segment spans residues 429–442 (MDKNSWLVAHFHNG). The chain crosses the membrane as a helical span at residues 443–463 (FSYWIYGCMGVLAALFMWKFV). The Cytoplasmic segment spans residues 464–491 (PETKGKTLEELEALWEPETKKTQQTATL).

The protein belongs to the major facilitator superfamily. Sugar transporter (TC 2.A.1.1) family.

Its subcellular location is the cell inner membrane. The enzyme catalyses D-xylose(in) + H(+)(in) = D-xylose(out) + H(+)(out). In terms of biological role, uptake of D-xylose across the boundary membrane with the concomitant transport of protons into the cell (symport system). This is D-xylose-proton symporter (xylE) from Escherichia coli O157:H7.